We begin with the raw amino-acid sequence, 1347 residues long: Spermatogenesis-associated protein 31A7 (1347 aa).

The helical transmembrane segment at 23-43 (PWVLDIFLTLVFALGFFFLLL) threads the bilayer. 7 disordered regions span residues 55-88 (PSPS…RECP), 106-233 (GPHL…RDST), 374-397 (QDTT…GPQK), 628-658 (DESP…EAQK), 900-955 (RGIP…REAV), 1084-1161 (VHEE…PSVS), and 1313-1335 (KAVS…SHHH). Residues 60-82 (GKRKCPVGRRRRPRGRMKNHSLR) show a composition bias toward basic residues. The segment covering 165-178 (LASTPSPGPMTTSV) has biased composition (polar residues). Residues 198–211 (PEPPALFPHPPHTP) are compositionally biased toward pro residues. Polar residues-rich tracts occupy residues 631-651 (PGTS…STGE) and 927-948 (LTYS…SSKA). Basic and acidic residues-rich tracts occupy residues 1108 to 1127 (HKSE…RLEG) and 1137 to 1146 (RKTEDTHQDE).

This sequence belongs to the SPATA31 family.

The protein localises to the membrane. Functionally, may play a role in spermatogenesis. In Homo sapiens (Human), this protein is Spermatogenesis-associated protein 31A7.